Consider the following 324-residue polypeptide: Homoserine kinase (324 aa).

100-110 (PLSSGMGSSAA) serves as a coordination point for ATP.

It belongs to the GHMP kinase family. Homoserine kinase subfamily.

It is found in the cytoplasm. It catalyses the reaction L-homoserine + ATP = O-phospho-L-homoserine + ADP + H(+). It participates in amino-acid biosynthesis; L-threonine biosynthesis; L-threonine from L-aspartate: step 4/5. Its function is as follows. Catalyzes the ATP-dependent phosphorylation of L-homoserine to L-homoserine phosphate. In Chlorobaculum tepidum (strain ATCC 49652 / DSM 12025 / NBRC 103806 / TLS) (Chlorobium tepidum), this protein is Homoserine kinase.